A 180-amino-acid chain; its full sequence is MILYFHGFDATSPGNHEKMRQLQFVDPDVRLISYSTLHPKYDMQYLLNEVSRQLTQSDDPAPLAIGVGLGGYWAERIGFLNGLKTVMINPNLHPEDNMLGKIDRPEEYADIASKCVSQFREKHKGRGMCILSRQDEVHDNQAVASILAPFYPIVWDEEQRHKFPSLAAHLAEIKAFKEQQ.

It belongs to the UPF0227 family.

The protein is UPF0227 protein Shew_1627 of Shewanella loihica (strain ATCC BAA-1088 / PV-4).